A 616-amino-acid polypeptide reads, in one-letter code: Dihydroxy-acid dehydratase (616 aa).

Asp-81 is a Mg(2+) binding site. Cys-122 is a binding site for [2Fe-2S] cluster. Mg(2+)-binding residues include Asp-123 and Lys-124. Lys-124 carries the post-translational modification N6-carboxylysine. Cys-195 contributes to the [2Fe-2S] cluster binding site. A Mg(2+)-binding site is contributed by Glu-491. The Proton acceptor role is filled by Ser-517.

The protein belongs to the IlvD/Edd family. Homodimer. The cofactor is [2Fe-2S] cluster. Requires Mg(2+) as cofactor.

The catalysed reaction is (2R)-2,3-dihydroxy-3-methylbutanoate = 3-methyl-2-oxobutanoate + H2O. It carries out the reaction (2R,3R)-2,3-dihydroxy-3-methylpentanoate = (S)-3-methyl-2-oxopentanoate + H2O. The protein operates within amino-acid biosynthesis; L-isoleucine biosynthesis; L-isoleucine from 2-oxobutanoate: step 3/4. It participates in amino-acid biosynthesis; L-valine biosynthesis; L-valine from pyruvate: step 3/4. Functionally, functions in the biosynthesis of branched-chain amino acids. Catalyzes the dehydration of (2R,3R)-2,3-dihydroxy-3-methylpentanoate (2,3-dihydroxy-3-methylvalerate) into 2-oxo-3-methylpentanoate (2-oxo-3-methylvalerate) and of (2R)-2,3-dihydroxy-3-methylbutanoate (2,3-dihydroxyisovalerate) into 2-oxo-3-methylbutanoate (2-oxoisovalerate), the penultimate precursor to L-isoleucine and L-valine, respectively. In Escherichia coli (strain SMS-3-5 / SECEC), this protein is Dihydroxy-acid dehydratase.